A 975-amino-acid polypeptide reads, in one-letter code: E3 ubiquitin-protein ligase NEDD4-like (975 aa).

The residue at position 2 (Ala-2) is an N-acetylalanine. The region spanning 4–126 is the C2 domain; that stretch reads GLGEPVYGLS…TEDPTMERPY (123 aa). 3 disordered regions span residues 178 to 202, 244 to 272, and 285 to 312; these read DSND…WEEK, AAHR…VPEP, and DSLG…EELS. The WW 1 domain maps to 193-226; sequence PPLPPGWEEKVDNLGRTYYVNHNNRTTQWHRPSL. Position 312 is a phosphoserine (Ser-312). Thr-318 is subject to Phosphothreonine. Ser-342 bears the Phosphoserine; by WNK1 and WNK4 mark. Disordered stretches follow at residues 349–393 and 424–496; these read EQGH…GWEE and GASG…KVTQ. Position 367 is a phosphothreonine; by SGK1 (Thr-367). A WW 2 domain is found at 385–418; sequence PGLPSGWEERKDAKGRTYYVNHNNRTTTWTRPIM. The residue at position 446 (Ser-446) is a Phosphoserine. Ser-448 carries the phosphoserine; by PKA and SGK1 modification. The residue at position 449 (Ser-449) is a Phosphoserine; by WNK1 and WNK4. Basic and acidic residues predominate over residues 460–471; the sequence is GAKDSPVRRAVK. Ser-464, Ser-475, Ser-479, Ser-483, and Ser-487 each carry phosphoserine. WW domains lie at 497-530 and 548-581; these read SFLP…DPRL and GPLP…DPRL. Residues 640 to 974 enclose the HECT domain; the sequence is RPDVLKARLW…VENAQGFEGV (335 aa). Cys-942 (glycyl thioester intermediate) is an active-site residue.

Interacts with UBE2E3. Interacts with NDFIP1; this interaction activates the E3 ubiquitin-protein ligase. Interacts with NDFIP2; this interaction activates the E3 ubiquitin-protein ligase. Interacts (via WW domains) with SCN1A. Interacts (via WW domains) with SCN2A. Interacts (via WW domains) with SCN3A. Interacts (via WW domains) with SCN5A. Interacts (via WW domains) with SCN8A. Interacts (via WW domains) with SCN9A. Interacts (via WW domains) with SCN10A. Interacts (via WW domains) with CLCN5. Interacts with SMAD2. Interacts with SMAD3. Interacts with SMAD6. Interacts with SMAD7. The phosphorylated form interacts with 14-3-3 proteins. Interacts with TNK2. Interacts with WNK1. Interacts with SGK1. Interacts (via C2 domain) with NPC2. Interacts with ARRDC4. Interacts with KCNQ1; promotes internalization of KCNQ1. Interacts (via domains WW1, 3 and 4) with USP36; the interaction inhibits ubiquitination of, at least, NTRK1, KCNQ2 and KCNQ3 by NEDD4L. Interacts with PRRG4 (via cytoplasmic domain). Interacts with LDLRAD3; the interaction is direct. Interacts with UBE2D2. Interacts with TTYH2 and TTYH3. As to quaternary structure, (Microbial infection) Interacts with Epstein-Barr virus LMP2A. In terms of processing, phosphorylated by SGK1 or PKA; which impairs interaction with SCNN. Interaction with YWHAH inhibits dephosphorylation. Post-translationally, auto-ubiquitinated. Deubiquitinated by USP36, no effect on NEDD4L protein levels. Both proteins interact and regulate each other's ubiquitination levels. As to expression, ubiquitously expressed, with highest levels in prostate, pancreas, and kidney. Expressed in melanocytes.

It is found in the cytoplasm. Its subcellular location is the golgi apparatus. It localises to the endosome. The protein localises to the multivesicular body. It carries out the reaction S-ubiquitinyl-[E2 ubiquitin-conjugating enzyme]-L-cysteine + [acceptor protein]-L-lysine = [E2 ubiquitin-conjugating enzyme]-L-cysteine + N(6)-ubiquitinyl-[acceptor protein]-L-lysine.. It catalyses the reaction [E2 ubiquitin-conjugating enzyme]-S-ubiquitinyl-L-cysteine + [acceptor protein]-L-cysteine = [E2 ubiquitin-conjugating enzyme]-L-cysteine + [acceptor protein]-S-ubiquitinyl-L-cysteine.. It participates in protein modification; protein ubiquitination. Activated by NDFIP1- and NDFIP2-binding. In terms of biological role, E3 ubiquitin-protein ligase that mediates the polyubiquitination of lysine and cysteine residues on target proteins and is thereby implicated in the regulation of various signaling pathways including autophagy, innate immunity or DNA repair. Inhibits TGF-beta signaling by triggering SMAD2 and TGFBR1 ubiquitination and proteasome-dependent degradation. Downregulates autophagy and cell growth by ubiquitinating and reducing cellular ULK1 or ASCT2 levels. Promotes ubiquitination and internalization of various plasma membrane channels such as ENaC, SCN2A/Nav1.2, SCN3A/Nav1.3, SCN5A/Nav1.5, SCN9A/Nav1.7, SCN10A/Nav1.8, KCNA3/Kv1.3, KCNH2, EAAT1, KCNQ2/Kv7.2, KCNQ3/Kv7.3 or CLC5. Promotes ubiquitination and degradation of SGK1 and TNK2. Ubiquitinates BRAT1 and this ubiquitination is enhanced in the presence of NDFIP1. Plays a role in dendrite formation by melanocytes. Involved in the regulation of TOR signaling. Ubiquitinates and regulates protein levels of NTRK1 once this one is activated by NGF. Plays a role in antiviral innate immunity by catalyzing 'Lys-29'-linked cysteine ubiquitination of TRAF3, resulting in enhanced 'Lys-48' and 'Lys-63'-linked ubiquitination of TRAF3. Ubiquitinates TTYH2 and TTYH3 and regulates protein levels of TTYH2. The chain is E3 ubiquitin-protein ligase NEDD4-like from Homo sapiens (Human).